The sequence spans 95 residues: Co-chaperonin GroES (95 aa).

It belongs to the GroES chaperonin family. Heptamer of 7 subunits arranged in a ring. Interacts with the chaperonin GroEL.

It is found in the cytoplasm. In terms of biological role, together with the chaperonin GroEL, plays an essential role in assisting protein folding. The GroEL-GroES system forms a nano-cage that allows encapsulation of the non-native substrate proteins and provides a physical environment optimized to promote and accelerate protein folding. GroES binds to the apical surface of the GroEL ring, thereby capping the opening of the GroEL channel. The chain is Co-chaperonin GroES from Deinococcus radiodurans (strain ATCC 13939 / DSM 20539 / JCM 16871 / CCUG 27074 / LMG 4051 / NBRC 15346 / NCIMB 9279 / VKM B-1422 / R1).